A 437-amino-acid chain; its full sequence is Triacylglycerol lipase (437 aa).

The region spanning 1–100 (MVSYVVALPE…AELANASLLQ (100 aa)) is the PE domain. The segment at 101–206 (SEFASGIGNG…GNSPPPLLNS (106 aa)) is linker. Positions 207–437 (LLGQTVQYTT…QINQQLGIAA (231 aa)) are lipase. Residues 239–241 (HGG) carry the Involved in the stabilization of the negatively charged intermediate by the formation of the oxyanion hole motif. Residues serine 309, aspartate 383, and histidine 413 contribute to the active site.

The protein in the N-terminal section; belongs to the mycobacterial PE family. PGRS subfamily. This sequence in the C-terminal section; belongs to the 'GDXG' lipolytic enzyme family. As to quaternary structure, forms aggregates via its PE domain. In terms of processing, upon export, the PE domain is removed by proteolytic cleavage. Cleavage occurs at the cell surface and is not required for secretion. Cleaved after Gly-149 by the aspartic protease PecA. May also be cleaved before Leu-98 and after Ala-136.

The protein localises to the cytoplasm. The protein resides in the secreted. It localises to the cell wall. It is found in the cell surface. It carries out the reaction a triacylglycerol + H2O = a diacylglycerol + a fatty acid + H(+). The catalysed reaction is 1,2,3-tri-(9Z-octadecenoyl)-glycerol + H2O = di-(9Z)-octadecenoylglycerol + (9Z)-octadecenoate + H(+). The enzyme catalyses an acetyl ester + H2O = an aliphatic alcohol + acetate + H(+). It catalyses the reaction a butanoate ester + H2O = an aliphatic alcohol + butanoate + H(+). It carries out the reaction a hexanoate ester + H2O = an aliphatic alcohol + hexanoate + H(+). The catalysed reaction is an octanoate ester + H2O = an aliphatic alcohol + octanoate + H(+). The enzyme catalyses a dodecanoate ester + H2O = an aliphatic alcohol + dodecanoate + H(+). It catalyses the reaction a tetradecanoate ester + H2O = an aliphatic alcohol + tetradecanoate + H(+). It carries out the reaction hexadecanoate ester + H2O = an aliphatic alcohol + hexadecanoate + H(+). The catalysed reaction is octadecanoate ester + H2O = an aliphatic alcohol + octadecanoate + H(+). The enzyme catalyses 1-butyrylglycerol + H2O = butanoate + glycerol + H(+). It catalyses the reaction 1,2,3-tributanoylglycerol + H2O = dibutanoylglycerol + butanoate + H(+). With respect to regulation, PE domain down-regulates lipase activity. Cleavage by PecA does not affect surface localization and lipase activity. Its activity is regulated as follows. Inhibited by diethyl-p-nitrophenyl phosphate (E-600) at 0.5 uM, by phenylmethanesulfonyl fluoride at 5 mM and by polyethylene glycol sorbitan monolaurate (Tween 20). Also inhibited by CaCl(2), CoCl(2), MnCl(2), ZnCl(2) and MgCl(2). Inhibited by several hydrazides compounds. Stimulated slightly by SDS at concentrations up to 2 mM, above which the activity is severely inhibited. Functionally, catalyzes the hydrolysis of both intracellular and extracellular triacylglycerol (TAG). In vitro, can also hydrolyze p-nitrophenyl (pNP) esters with various chain lengths, including pNP-acetate (C2), pNP-butyrate (C4), pNP-caproate (C6), pNP-caprylate (C8), pNP-laurate (C12), pNP-myristate (C14), pNP-palmitate (C16) and pNP-stearate (C18). Also hydrolyzes monobutyrin, tributyrin and trioctanoin. Overexpression results in increase of virulence characterized by reduced survival of infected mouse and increased burden of bacilli in the lungs. Hydrolyzes internal or host-derived TAG depending on its localization. Its function is as follows. Hydrolyzes TAG that accumulates within mycobacterial intracytosolic lipid inclusions (ILI). Probably responsible for the utilization of stored long-chain TAG during the dormancy and reactivation stages of the pathogen. Hydrolyzes host-derived TAG. This is Triacylglycerol lipase from Mycobacterium tuberculosis (strain ATCC 25618 / H37Rv).